The sequence spans 226 residues: Transmembrane 4 L6 family member 20 (226 aa).

The Lumenal portion of the chain corresponds to Met-1 to Ser-14. A helical transmembrane segment spans residues Leu-15 to Val-35. Topologically, residues Glu-36 to Glu-49 are cytoplasmic. Residues Trp-50 to Leu-70 traverse the membrane as a helical segment. The Lumenal segment spans residues Ala-71–Gly-83. A helical membrane pass occupies residues Met-84–Val-104. The Cytoplasmic segment spans residues Ser-105–Ser-191. A helical transmembrane segment spans residues Leu-192–Leu-212. Topologically, residues Gly-213–Val-226 are lumenal.

Belongs to the L6 tetraspanin family. Post-translationally, glycosylated at Asn-132, Asn-148 and Asn-163 in presence of ceramide which inverts the orientation of TM4SF20 in membranes exposing these residues to the endoplasmic reticulum lumen. In terms of processing, cleaved by signal peptidase at Ser-14 but the peptide does not act as a signal peptide. Cleavage is inhibited by ceramide which inverts the orientation of TM4SF20 in membranes exposing the N-terminus to the cytosol and not to the endoplasmic reticulum lumen.

The protein localises to the membrane. The protein resides in the endoplasmic reticulum membrane. Its function is as follows. Polytopic transmembrane protein. Inhibits regulated intramembrane proteolysis (RIP) of CREB3L1, inhibiting its activation and the induction of collagen synthesis. In response to ceramide, which alters TM4SF20 membrane topology, stimulates RIP activation of CREB3L1. Ceramide reverses the direction through which transmembrane helices are translocated into the endoplasmic reticulum membrane during translation of TM4SF20, this mechanism is called 'regulated alternative translocation' (RAT) and regulates the function of the transmembrane protein. This chain is Transmembrane 4 L6 family member 20 (Tm4sf20), found in Mus musculus (Mouse).